The primary structure comprises 487 residues: Protein nucleotidyltransferase YdiU (487 aa).

Residues glycine 90, glycine 92, arginine 93, lysine 113, aspartate 125, glycine 126, arginine 176, and arginine 183 each coordinate ATP. Catalysis depends on aspartate 252, which acts as the Proton acceptor. Mg(2+) contacts are provided by asparagine 253 and aspartate 262. Residue aspartate 262 coordinates ATP.

The protein belongs to the SELO family. It depends on Mg(2+) as a cofactor. Mn(2+) serves as cofactor.

It carries out the reaction L-seryl-[protein] + ATP = 3-O-(5'-adenylyl)-L-seryl-[protein] + diphosphate. It catalyses the reaction L-threonyl-[protein] + ATP = 3-O-(5'-adenylyl)-L-threonyl-[protein] + diphosphate. The enzyme catalyses L-tyrosyl-[protein] + ATP = O-(5'-adenylyl)-L-tyrosyl-[protein] + diphosphate. The catalysed reaction is L-histidyl-[protein] + UTP = N(tele)-(5'-uridylyl)-L-histidyl-[protein] + diphosphate. It carries out the reaction L-seryl-[protein] + UTP = O-(5'-uridylyl)-L-seryl-[protein] + diphosphate. It catalyses the reaction L-tyrosyl-[protein] + UTP = O-(5'-uridylyl)-L-tyrosyl-[protein] + diphosphate. Functionally, nucleotidyltransferase involved in the post-translational modification of proteins. It can catalyze the addition of adenosine monophosphate (AMP) or uridine monophosphate (UMP) to a protein, resulting in modifications known as AMPylation and UMPylation. The protein is Protein nucleotidyltransferase YdiU of Pseudomonas savastanoi pv. phaseolicola (strain 1448A / Race 6) (Pseudomonas syringae pv. phaseolicola (strain 1448A / Race 6)).